A 273-amino-acid polypeptide reads, in one-letter code: Urease accessory protein UreD (273 aa).

The protein belongs to the UreD family. UreD, UreF and UreG form a complex that acts as a GTP-hydrolysis-dependent molecular chaperone, activating the urease apoprotein by helping to assemble the nickel containing metallocenter of UreC. The UreE protein probably delivers the nickel.

Its subcellular location is the cytoplasm. In terms of biological role, required for maturation of urease via the functional incorporation of the urease nickel metallocenter. This chain is Urease accessory protein UreD, found in Rhizobium etli (strain ATCC 51251 / DSM 11541 / JCM 21823 / NBRC 15573 / CFN 42).